Reading from the N-terminus, the 485-residue chain is NADH-quinone oxidoreductase subunit N (485 aa).

The next 14 helical transmembrane spans lie at 8–28, 35–55, 71–91, 105–125, 127–147, 159–179, 203–223, 235–255, 271–291, 297–317, 326–346, 373–393, 408–430, and 455–475; these read LIALLPLLIVGLTVVVVMLSI, FLNATLSVIGLNAALVSLWFV, GFAMLYTGLVLLASLATCTFA, FYLLVLIASLGGILLANANHL, ALFLGIELISLPLFGLIGYAF, YTILSAAASSFLLFGMALVYA, LLAGFGLMIVGLGFKLSLVPF, PAPVSTFLATASKIAIFGVVM, VVLGIIAFASIIFGNLMALSQ, LLGYSSISHLGYLLVALIALQ, VGVYLAGYLFSSLGAFGVVSL, AAVMTVMMLSLAGIPMTLGFI, WWLVAAVVVGSAIGLYYYLRVAV, and IVVLISALLVLVLGVWPQPLI.

Belongs to the complex I subunit 2 family. As to quaternary structure, NDH-1 is composed of 13 different subunits. Subunits NuoA, H, J, K, L, M, N constitute the membrane sector of the complex.

The protein localises to the cell inner membrane. The catalysed reaction is a quinone + NADH + 5 H(+)(in) = a quinol + NAD(+) + 4 H(+)(out). Functionally, NDH-1 shuttles electrons from NADH, via FMN and iron-sulfur (Fe-S) centers, to quinones in the respiratory chain. The immediate electron acceptor for the enzyme in this species is believed to be ubiquinone. Couples the redox reaction to proton translocation (for every two electrons transferred, four hydrogen ions are translocated across the cytoplasmic membrane), and thus conserves the redox energy in a proton gradient. The polypeptide is NADH-quinone oxidoreductase subunit N (Salmonella typhimurium (strain LT2 / SGSC1412 / ATCC 700720)).